We begin with the raw amino-acid sequence, 493 residues long: 3-octaprenyl-4-hydroxybenzoate carboxy-lyase (493 aa).

Asn-172 lines the Mn(2+) pocket. Prenylated FMN contacts are provided by residues 175-177, 189-191, and 194-195; these read IYR, RWL, and RG. Glu-238 contacts Mn(2+). Asp-287 functions as the Proton donor in the catalytic mechanism.

The protein belongs to the UbiD family. As to quaternary structure, homohexamer. The cofactor is prenylated FMN. It depends on Mn(2+) as a cofactor.

The protein resides in the cell membrane. It catalyses the reaction a 4-hydroxy-3-(all-trans-polyprenyl)benzoate + H(+) = a 2-(all-trans-polyprenyl)phenol + CO2. It functions in the pathway cofactor biosynthesis; ubiquinone biosynthesis. Its function is as follows. Catalyzes the decarboxylation of 3-octaprenyl-4-hydroxy benzoate to 2-octaprenylphenol, an intermediate step in ubiquinone biosynthesis. This Shewanella sp. (strain ANA-3) protein is 3-octaprenyl-4-hydroxybenzoate carboxy-lyase.